Consider the following 104-residue polypeptide: uncharacterized protein (104 aa).

This sequence to A.aeolicus AQ_377.

This is an uncharacterized protein from Archaeoglobus fulgidus (strain ATCC 49558 / DSM 4304 / JCM 9628 / NBRC 100126 / VC-16).